The following is a 126-amino-acid chain: Aspartate 1-decarboxylase (126 aa).

Catalysis depends on Ser25, which acts as the Schiff-base intermediate with substrate; via pyruvic acid. Position 25 is a pyruvic acid (Ser) (Ser25). Thr57 contacts substrate. The active-site Proton donor is the Tyr58. Position 73–75 (73–75) interacts with substrate; it reads GGA.

Belongs to the PanD family. In terms of assembly, heterooctamer of four alpha and four beta subunits. Requires pyruvate as cofactor. Post-translationally, is synthesized initially as an inactive proenzyme, which is activated by self-cleavage at a specific serine bond to produce a beta-subunit with a hydroxyl group at its C-terminus and an alpha-subunit with a pyruvoyl group at its N-terminus.

It localises to the cytoplasm. It carries out the reaction L-aspartate + H(+) = beta-alanine + CO2. It participates in cofactor biosynthesis; (R)-pantothenate biosynthesis; beta-alanine from L-aspartate: step 1/1. In terms of biological role, catalyzes the pyruvoyl-dependent decarboxylation of aspartate to produce beta-alanine. The sequence is that of Aspartate 1-decarboxylase from Xanthomonas campestris pv. campestris (strain ATCC 33913 / DSM 3586 / NCPPB 528 / LMG 568 / P 25).